A 249-amino-acid chain; its full sequence is 23S rRNA (guanosine-2'-O-)-methyltransferase RlmB (249 aa).

The S-adenosyl-L-methionine site is built by G197, I217, and L226.

Belongs to the class IV-like SAM-binding methyltransferase superfamily. RNA methyltransferase TrmH family. RlmB subfamily.

The protein resides in the cytoplasm. It carries out the reaction guanosine(2251) in 23S rRNA + S-adenosyl-L-methionine = 2'-O-methylguanosine(2251) in 23S rRNA + S-adenosyl-L-homocysteine + H(+). Its function is as follows. Specifically methylates the ribose of guanosine 2251 in 23S rRNA. This is 23S rRNA (guanosine-2'-O-)-methyltransferase RlmB from Ralstonia nicotianae (strain ATCC BAA-1114 / GMI1000) (Ralstonia solanacearum).